Consider the following 523-residue polypeptide: WD repeat-containing protein YPL247C (523 aa).

Residues 1–64 (MDPFHNGNKR…TTNGGNSKRN (64 aa)) form a disordered region. The segment covering 9–40 (KRSSISFGSSQRQPYNKNNYLSGTNGPSSAAQ) has biased composition (polar residues). Position 47 is a phosphoserine (Ser-47). Over residues 52 to 64 (SGNTTNGGNSKRN) the composition is skewed to low complexity. Ser-65 is subject to Phosphoserine. 4 WD repeats span residues 173–213 (DVVY…RQFQ), 241–281 (GTFP…YVKT), 285–325 (AHDS…HSTI), and 392–432 (GHGS…MEIN). Residues 436–472 (SKSPSIHGTSLEDPDGDTEMTDGGAGSGLNEDPLSLN) form a disordered region.

It belongs to the WD repeat WDR68 family.

It localises to the cytoplasm. The protein resides in the nucleus. The polypeptide is WD repeat-containing protein YPL247C (Saccharomyces cerevisiae (strain ATCC 204508 / S288c) (Baker's yeast)).